A 347-amino-acid chain; its full sequence is Heat-inducible transcription repressor HrcA (347 aa).

The protein belongs to the HrcA family.

Its function is as follows. Negative regulator of class I heat shock genes (grpE-dnaK-dnaJ and groELS operons). Prevents heat-shock induction of these operons. The chain is Heat-inducible transcription repressor HrcA from Rhodococcus jostii (strain RHA1).